Here is a 1148-residue protein sequence, read N- to C-terminus: MKLSRQFTVFGSAIFCVVIFSLYLMLDRGHLDYPRGPRQEGSFPQGQLSILQEKIDHLERLLAENNEIISNIRDSVINLSESVEDGPRGPAGNASQGSAHLHSAQLALQADPKDCLFASQSGNQHRDVQMLDVYDLIPFDNPDGGVWKQGFDIKYEADEWDREPLQVFVVPHSHNDPGWLKTFNDYFRDKTQYIFNNMVLKLKEDSSRKFIWSEISYLAKWWDIIDNPKKEAVKSLLQNGQLEIVTGGWVMADEATTHYFALIDQLIEGHQWLEKNLGVKPRSGWAIDPFGHSPTMTYLLKRAGFSHMLIQRVHYSVKKHFSLQKTLEFFWRQNWDLGSTTDILCHMMPFYSYDIPHTCGPDPKICCQFDFKRLPGGRYGCPWGVPPEAISPGNVQSRAQMLLDQYRKKSKLFRTKVLLAPLGDDFRFSEYTEWDLQYRNYEQLFSYMNSQPHLKVKIQFGTLSDYFDALEKSVAAEKKGGQSVFPALSGDFFTYADRDDHYWSGYFTSRPFYKRMDRIMESRLRTAEILYHLALKQAQKYKINKFLSSPHYTTLTEARRNLGLFQHHDAITGTAKDWVVVDYGTRLFQSLNSLEKIIGDSAFLLILKDKKLYQSDPSKAFLEMDTKQSSQDSLPKKNIIQLSAQEPRYLVVYNPFEQERHSVVSVRVNSATVKVLSDLGKAVEVQVSAVWKDMRTTSQAAYEVAFLAHLPPLGLKVYKILESQSSSSHLADYFLYNNDGQAESGIFHMKNMVDSGDAITIENSFLTLGFDRSGLMEKVRRKEDNKQQELKVQFLWYGTTNKRDKSGAYLFLPDGQGQPYVSLRTPFVRVTRGRIYSDVTCFLEHVTHKVRLYHIQGIEGQSMEVSNIVDIRSVHNREIVMRISSKINNQNRYYTDLNGYQIQPRRTMAKLPLQANVYPMSTMAYIQDAAHRLTLLSAQSLGASSMASGQIEVFMDRRLMQDDNRGLGQGVHDNKITANLFRILLEKRNGMNMEEDKKSPVSYPSLLSHMTSAFLNHPFLPMVLSGQLPSPAIELLSEFRLLQSSLPCDIHLVNLRTIQSKVGKGYSDEAALILHRKVFDCQLSSRAMGLPCSTTQGKMSIPKLFNNFAVESFIPSSLSLMHSPPDAQNTSEVSLSPMEISTSRIRLR.

Residues 1–5 (MKLSR) are Cytoplasmic-facing. Residues 6 to 26 (QFTVFGSAIFCVVIFSLYLML) traverse the membrane as a helical; Signal-anchor for type II membrane protein segment. Residues 27 to 1148 (DRGHLDYPRG…EISTSRIRLR (1122 aa)) are Lumenal-facing. Phosphoserine occurs at positions 80 and 82. N-linked (GlcNAc...) asparagine glycosylation occurs at N93. Positions 174, 176, 288, and 568 each coordinate Zn(2+). The Nucleophile role is filled by D288. Positions 1121–1148 (MHSPPDAQNTSEVSLSPMEISTSRIRLR) are disordered.

It belongs to the glycosyl hydrolase 38 family. In terms of assembly, homodimer; disulfide-linked. It depends on Zn(2+) as a cofactor. In terms of processing, glycosylated. In terms of tissue distribution, liver.

The protein resides in the golgi apparatus membrane. The enzyme catalyses N(4)-{beta-D-GlcNAc-(1-&gt;2)-alpha-D-Man-(1-&gt;3)-[alpha-D-Man-(1-&gt;3)-[alpha-D-Man-(1-&gt;6)]-alpha-D-Man-(1-&gt;6)]-beta-D-Man-(1-&gt;4)-beta-D-GlcNAc-(1-&gt;4)-beta-D-GlcNAc}-L-asparaginyl-[protein] + 2 H2O = 2 alpha-D-mannopyranose + an N(4)-{beta-D-GlcNAc-(1-&gt;2)-alpha-D-Man-(1-&gt;3)-[alpha-D-Man-(1-&gt;6)]-beta-D-Man-(1-&gt;4)-beta-D-GlcNAc-(1-&gt;4)-beta-D-GlcNAc}-L-asparaginyl-[protein]. The protein operates within protein modification; protein glycosylation. With respect to regulation, inhibited by swainsonine. Its function is as follows. Catalyzes the first committed step in the biosynthesis of complex N-glycans. It controls conversion of high mannose to complex N-glycans; the final hydrolytic step in the N-glycan maturation pathway. The chain is Alpha-mannosidase 2 (Man2a1) from Rattus norvegicus (Rat).